Here is a 277-residue protein sequence, read N- to C-terminus: Small ribosomal subunit protein mS23 (277 aa).

2 disordered regions span residues 48–85 and 232–277; these read APSH…KKPS and LAAF…GPPI. The span at 244–269 shows a compositional bias: acidic residues; it reads ESGESEDEIPLIEEEDAIGASEESET.

Belongs to the mitochondrion-specific ribosomal protein mS23 family. In terms of assembly, component of the mitochondrial small ribosomal subunit.

The protein localises to the mitochondrion. This is Small ribosomal subunit protein mS23 (RSM25) from Ajellomyces capsulatus (strain NAm1 / WU24) (Darling's disease fungus).